The chain runs to 41 residues: MKIRNSLKSLLGRHRDNRLVRRKGRIYIINKTQKRYKARQG.

Belongs to the bacterial ribosomal protein bL36 family.

The protein is Large ribosomal subunit protein bL36 of Azorhizobium caulinodans (strain ATCC 43989 / DSM 5975 / JCM 20966 / LMG 6465 / NBRC 14845 / NCIMB 13405 / ORS 571).